The chain runs to 78 residues: D-alanyl carrier protein (78 aa).

Positions 1-77 constitute a Carrier domain; that stretch reads MDLKEQIVEI…KVVAKVESLI (77 aa). Position 35 is an O-(pantetheine 4'-phosphoryl)serine (S35).

It belongs to the DltC family. In terms of processing, 4'-phosphopantetheine is transferred from CoA to a specific serine of apo-DCP.

The protein localises to the cytoplasm. It functions in the pathway cell wall biogenesis; lipoteichoic acid biosynthesis. Functionally, carrier protein involved in the D-alanylation of lipoteichoic acid (LTA). The loading of thioester-linked D-alanine onto DltC is catalyzed by D-alanine--D-alanyl carrier protein ligase DltA. The DltC-carried D-alanyl group is further transferred to cell membrane phosphatidylglycerol (PG) by forming an ester bond, probably catalyzed by DltD. D-alanylation of LTA plays an important role in modulating the properties of the cell wall in Gram-positive bacteria, influencing the net charge of the cell wall. The protein is D-alanyl carrier protein of Leuconostoc mesenteroides subsp. mesenteroides (strain ATCC 8293 / DSM 20343 / BCRC 11652 / CCM 1803 / JCM 6124 / NCDO 523 / NBRC 100496 / NCIMB 8023 / NCTC 12954 / NRRL B-1118 / 37Y).